The sequence spans 722 residues: Ras and EF-hand domain-containing protein (722 aa).

EF-hand domains are found at residues 5-39 (DELS…ELKV) and 39-74 (VSPS…ARGL). Positions 75–84 (HMPEGKKDVE) are enriched in basic and acidic residues. A disordered region spans residues 75–109 (HMPEGKKDVEQGEPPKSPSTPDKEEKPEETSSPAW). Positions 156–335 (REIRLQSTEM…ANRKLHDSND (180 aa)) form a coiled coil. Polar residues predominate over residues 355–374 (INTSPGSTISRNSPKLTRCT). Disordered stretches follow at residues 355-384 (INTS…PRSS) and 439-491 (FHRS…SGAS). Residues 480–491 (SNPVSRSSSGAS) are compositionally biased toward low complexity. Residues 532–537 (AVGKSS), 635–638 (NKAD), and 672–673 (AK) contribute to the GTP site.

It belongs to the small GTPase superfamily. Rab family. Homodimer.

Its subcellular location is the cytoplasm. It is found in the perinuclear region. Binds predominantly GDP, and also GTP. This is Ras and EF-hand domain-containing protein (rasef) from Xenopus tropicalis (Western clawed frog).